A 79-amino-acid chain; its full sequence is Sec-independent protein translocase protein TatA (79 aa).

A helical transmembrane segment spans residues 1–21 (MGSLSIWHWIVVIAVILLLFG). Residues 43 to 60 (MQDDEKTAEKPEPVKTID) show a composition bias toward basic and acidic residues. Residues 43–79 (MQDDEKTAEKPEPVKTIDHNAPAPGASRSDVGSKTTV) form a disordered region.

Belongs to the TatA/E family. In terms of assembly, the Tat system comprises two distinct complexes: a TatABC complex, containing multiple copies of TatA, TatB and TatC subunits, and a separate TatA complex, containing only TatA subunits. Substrates initially bind to the TatABC complex, which probably triggers association of the separate TatA complex to form the active translocon.

Its subcellular location is the cell inner membrane. Part of the twin-arginine translocation (Tat) system that transports large folded proteins containing a characteristic twin-arginine motif in their signal peptide across membranes. TatA could form the protein-conducting channel of the Tat system. This chain is Sec-independent protein translocase protein TatA, found in Nitrobacter hamburgensis (strain DSM 10229 / NCIMB 13809 / X14).